A 691-amino-acid polypeptide reads, in one-letter code: Proprotein convertase subtilisin/kexin type 9 (691 aa).

An N-terminal signal peptide occupies residues 1-29; sequence MGTVSSRRLWWPLPLLLLLLLLGPAGARA. Positions 30 to 151 are excised as a propeptide; sequence QEDDDGDYEE…IEEDSSVFAQ (122 aa). At tyrosine 37 the chain carries Sulfotyrosine. Serine 46 carries the post-translational modification Phosphoserine. The 73-residue stretch at 76 to 148 folds into the Inhibitor I9 domain; that stretch reads TYVVVLKEET…VDYIEEDSSV (73 aa). The Peptidase S8 domain maps to 154 to 460; that stretch reads PWNLERITPA…GWQLFCRTVW (307 aa). Residues aspartate 185 and histidine 225 each act as charge relay system in the active site. Intrachain disulfides connect cysteine 222/cysteine 254 and cysteine 322/cysteine 357. The active-site Charge relay system is serine 385. The segment at 449–691 is C-terminal domain; the sequence is GAGWQLFCRT…HLAQASQELQ (243 aa). Cystine bridges form between cysteine 456-cysteine 526, cysteine 476-cysteine 525, and cysteine 485-cysteine 508. Asparagine 532 carries N-linked (GlcNAc...) asparagine glycosylation. Cystine bridges form between cysteine 533/cysteine 600, cysteine 551/cysteine 599, cysteine 561/cysteine 587, cysteine 607/cysteine 678, cysteine 625/cysteine 677, and cysteine 634/cysteine 653. Serine 687 bears the Phosphoserine mark.

This sequence belongs to the peptidase S8 family. As to quaternary structure, monomer. Can self-associate to form dimers and higher multimers which may have increased LDLR degrading activity. The precursor protein but not the mature protein may form multimers. Interacts with APOB, VLDLR, LRP8/APOER2 and BACE1. The full-length immature form (pro-PCSK9) interacts with SCNN1A, SCNN1B and SCNN1G. The pro-PCSK9 form (via C-terminal domain) interacts with LDLR. Interacts (via the C-terminal domain) with ANXA2 (via repeat Annexin 1); the interaction inhibits the degradation of LDLR. The cofactor is Ca(2+). In terms of processing, cleavage by furin and PCSK5 generates a truncated inactive protein that is unable to induce LDLR degradation. Post-translationally, undergoes autocatalytic cleavage in the endoplasmic reticulum to release the propeptide from the N-terminus and the cleavage of the propeptide is strictly required for its maturation and activation. The cleaved propeptide however remains associated with the catalytic domain through non-covalent interactions, preventing potential substrates from accessing its active site. As a result, it is secreted from cells as a propeptide-containing, enzymatically inactive protein. Phosphorylation protects the propeptide against proteolysis.

The protein localises to the cytoplasm. The protein resides in the secreted. Its subcellular location is the endosome. It is found in the lysosome. It localises to the cell surface. The protein localises to the endoplasmic reticulum. The protein resides in the golgi apparatus. Its proteolytic activity is autoinhibited by the non-covalent binding of the propeptide to the catalytic domain. Inhibited by EGTA. Crucial player in the regulation of plasma cholesterol homeostasis. Binds to low-density lipid receptor family members: low density lipoprotein receptor (LDLR), very low density lipoprotein receptor (VLDLR), apolipoprotein E receptor (LRP1/APOER) and apolipoprotein receptor 2 (LRP8/APOER2), and promotes their degradation in intracellular acidic compartments. Acts via a non-proteolytic mechanism to enhance the degradation of the hepatic LDLR through a clathrin LDLRAP1/ARH-mediated pathway. May prevent the recycling of LDLR from endosomes to the cell surface or direct it to lysosomes for degradation. Can induce ubiquitination of LDLR leading to its subsequent degradation. Inhibits intracellular degradation of APOB via the autophagosome/lysosome pathway in a LDLR-independent manner. Involved in the disposal of non-acetylated intermediates of BACE1 in the early secretory pathway. Inhibits epithelial Na(+) channel (ENaC)-mediated Na(+) absorption by reducing ENaC surface expression primarily by increasing its proteasomal degradation. Regulates neuronal apoptosis via modulation of LRP8/APOER2 levels and related anti-apoptotic signaling pathways. The sequence is that of Proprotein convertase subtilisin/kexin type 9 (PCSK9) from Saimiri boliviensis boliviensis (Bolivian squirrel monkey).